The sequence spans 285 residues: Protein unc-1 (285 aa).

2 helical membrane passes run I27–F47 and I69–I89.

Belongs to the band 7/mec-2 family.

Its subcellular location is the cell membrane. The protein resides in the cell junction. The protein localises to the gap junction. The sequence is that of Protein unc-1 (unc-1) from Caenorhabditis elegans.